The chain runs to 69 residues: Putative membrane protein insertion efficiency factor (69 aa).

This sequence belongs to the UPF0161 family.

It is found in the cell inner membrane. In terms of biological role, could be involved in insertion of integral membrane proteins into the membrane. This Dechloromonas aromatica (strain RCB) protein is Putative membrane protein insertion efficiency factor.